Consider the following 369-residue polypeptide: Tyrosyl-DNA phosphodiesterase 2 (369 aa).

The span at methionine 1 to glycine 17 shows a compositional bias: basic and acidic residues. Disordered stretches follow at residues methionine 1–glutamate 26 and alanine 80–aspartate 117. Residues aspartate 99–serine 112 show a composition bias toward low complexity. Residues asparagine 127–leucine 131 are interaction with 5' end of substrate DNA. 2 residues coordinate Mg(2+): aspartate 129 and glutamate 159. Residues histidine 233 to arginine 238 are interaction with 5' end of substrate DNA. The Proton donor/acceptor role is filled by aspartate 269. Residues asparagine 271–arginine 273 form an interaction with 5' end of substrate DNA region.

This sequence belongs to the CCR4/nocturin family. TTRAP/TDP2 subfamily. It depends on Mg(2+) as a cofactor. Requires Mn(2+) as cofactor.

It is found in the nucleus. The protein localises to the PML body. DNA repair enzyme that can remove a variety of covalent adducts from DNA through hydrolysis of a 5'-phosphodiester bond, giving rise to DNA with a free 5' phosphate. Catalyzes the hydrolysis of dead-end complexes between DNA and the topoisomerase 2 (TOP2) active site tyrosine residue. Hydrolyzes 5'-phosphoglycolates on protruding 5' ends on DNA double-strand breaks (DSBs) due to DNA damage by radiation and free radicals. The 5'-tyrosyl DNA phosphodiesterase activity can enable the repair of TOP2-induced DSBs without the need for nuclease activity, creating a 'clean' DSB with 5'-phosphate termini that are ready for ligation. Also has 3'-tyrosyl DNA phosphodiesterase activity, but less efficiently and much slower than TDP1. The chain is Tyrosyl-DNA phosphodiesterase 2 (TDP2) from Gallus gallus (Chicken).